Consider the following 247-residue polypeptide: uncharacterized protein (247 aa).

Helical transmembrane passes span 108 to 128 (WYIN…FLII), 136 to 156 (IFSV…NIIC), and 194 to 214 (GAKL…LFFI).

Its subcellular location is the membrane. This is an uncharacterized protein from Caenorhabditis elegans.